We begin with the raw amino-acid sequence, 33 residues long: Cytochrome b6-f complex subunit 8 (33 aa).

A helical membrane pass occupies residues 2-22; that stretch reads LFTFAWASLAAIFTFSIAMVV.

It belongs to the PetN family. The 4 large subunits of the cytochrome b6-f complex are cytochrome b6, subunit IV (17 kDa polypeptide, PetD), cytochrome f and the Rieske protein, while the 4 small subunits are PetG, PetL, PetM and PetN. The complex functions as a dimer.

It is found in the cellular thylakoid membrane. Functionally, component of the cytochrome b6-f complex, which mediates electron transfer between photosystem II (PSII) and photosystem I (PSI), cyclic electron flow around PSI, and state transitions. The chain is Cytochrome b6-f complex subunit 8 from Prochlorococcus marinus (strain MIT 9211).